The sequence spans 209 residues: Large ribosomal subunit protein uL3 (209 aa).

Residue glutamine 150 is modified to N5-methylglutamine.

This sequence belongs to the universal ribosomal protein uL3 family. As to quaternary structure, part of the 50S ribosomal subunit. Forms a cluster with proteins L14 and L19. Methylated by PrmB.

Its function is as follows. One of the primary rRNA binding proteins, it binds directly near the 3'-end of the 23S rRNA, where it nucleates assembly of the 50S subunit. This Salmonella paratyphi C (strain RKS4594) protein is Large ribosomal subunit protein uL3.